The following is a 33-amino-acid chain: Putative tumor antigen NA88-A (33 aa).

In terms of tissue distribution, expressed in testis and melanoma cell lines.

This is Putative tumor antigen NA88-A (VENTXP1) from Homo sapiens (Human).